Consider the following 89-residue polypeptide: Small ribosomal subunit protein uS15 (89 aa).

The protein belongs to the universal ribosomal protein uS15 family. Part of the 30S ribosomal subunit. Forms a bridge to the 50S subunit in the 70S ribosome, contacting the 23S rRNA.

Functionally, one of the primary rRNA binding proteins, it binds directly to 16S rRNA where it helps nucleate assembly of the platform of the 30S subunit by binding and bridging several RNA helices of the 16S rRNA. Forms an intersubunit bridge (bridge B4) with the 23S rRNA of the 50S subunit in the ribosome. This Vibrio cholerae serotype O1 (strain ATCC 39541 / Classical Ogawa 395 / O395) protein is Small ribosomal subunit protein uS15.